A 508-amino-acid chain; its full sequence is Photosystem II CP47 reaction center protein (508 aa).

Helical transmembrane passes span 21-36, 101-115, 140-156, 203-218, 237-252, and 457-472; these read AVHL…WAGS, IVLS…IWHW, GIHL…FGAF, IAAG…FHLC, VLSS…AFVV, and CFAL…HGAR.

The protein belongs to the PsbB/PsbC family. PsbB subfamily. In terms of assembly, PSII is composed of 1 copy each of membrane proteins PsbA, PsbB, PsbC, PsbD, PsbE, PsbF, PsbH, PsbI, PsbJ, PsbK, PsbL, PsbM, PsbT, PsbX, PsbY, PsbZ, Psb30/Ycf12, at least 3 peripheral proteins of the oxygen-evolving complex and a large number of cofactors. It forms dimeric complexes. Binds multiple chlorophylls. PSII binds additional chlorophylls, carotenoids and specific lipids. serves as cofactor.

It localises to the plastid. The protein resides in the chloroplast thylakoid membrane. In terms of biological role, one of the components of the core complex of photosystem II (PSII). It binds chlorophyll and helps catalyze the primary light-induced photochemical processes of PSII. PSII is a light-driven water:plastoquinone oxidoreductase, using light energy to abstract electrons from H(2)O, generating O(2) and a proton gradient subsequently used for ATP formation. This is Photosystem II CP47 reaction center protein from Chlorella vulgaris (Green alga).